Reading from the N-terminus, the 586-residue chain is SPbeta prophage-derived uncharacterized protein YorA (586 aa).

13 PbH1 repeats span residues 108 to 147, 148 to 170, 184 to 206, 207 to 235, 246 to 268, 288 to 313, 320 to 341, 364 to 384, 387 to 410, 411 to 432, 435 to 456, 481 to 504, and 505 to 531; these read AENV…HVHG, SKNV…WIAA, SKSV…ATNG, CEGL…DLEG, PYEL…TAHT, STDV…DSVG, GNRI…MIRG, AEDV…QIQV, SSDI…KVMD, SNDV…YCER, AVRI…YWDK, MYNI…HLIG, and GSEH…YLNG.

The chain is SPbeta prophage-derived uncharacterized protein YorA (yorA) from Bacillus subtilis (strain 168).